Here is a 392-residue protein sequence, read N- to C-terminus: Formate-dependent phosphoribosylglycinamide formyltransferase (392 aa).

N(1)-(5-phospho-beta-D-ribosyl)glycinamide is bound by residues 12-13 (EL) and E72. ATP contacts are provided by residues R104, K145, 150–155 (SSGKGQ), 185–188 (EAFV), and E193. Positions 109–300 (DLAARDLGLR…EFELHARAVL (192 aa)) constitute an ATP-grasp domain. 2 residues coordinate Mg(2+): E258 and E270. N(1)-(5-phospho-beta-D-ribosyl)glycinamide-binding positions include D277, K348, and 355 to 356 (RR).

The protein belongs to the PurK/PurT family. In terms of assembly, homodimer.

It carries out the reaction N(1)-(5-phospho-beta-D-ribosyl)glycinamide + formate + ATP = N(2)-formyl-N(1)-(5-phospho-beta-D-ribosyl)glycinamide + ADP + phosphate + H(+). Its pathway is purine metabolism; IMP biosynthesis via de novo pathway; N(2)-formyl-N(1)-(5-phospho-D-ribosyl)glycinamide from N(1)-(5-phospho-D-ribosyl)glycinamide (formate route): step 1/1. Its function is as follows. Involved in the de novo purine biosynthesis. Catalyzes the transfer of formate to 5-phospho-ribosyl-glycinamide (GAR), producing 5-phospho-ribosyl-N-formylglycinamide (FGAR). Formate is provided by PurU via hydrolysis of 10-formyl-tetrahydrofolate. This is Formate-dependent phosphoribosylglycinamide formyltransferase from Chlorobaculum tepidum (strain ATCC 49652 / DSM 12025 / NBRC 103806 / TLS) (Chlorobium tepidum).